A 196-amino-acid chain; its full sequence is MGRKKVEIKRIENKSSRQVTFSKRRNGLIEKARQLSILCESSIAVLVVSGSGKLYKSASGDNMSKIIDRYEIHHADELEALDLAEKTRNYLPLKELLEIVQSKLEESNVDNASVDTLISLEEQLETALSVTRARKTELMMGEVKSLQKTENLLREENQTLASQVGKKTFLVIEGDRGMSWENGSGNKVRETLPLLK.

Residues 1 to 61 (MGRKKVEIKR…GKLYKSASGD (61 aa)) enclose the MADS-box domain. Residues 80–170 (ALDLAEKTRN…ASQVGKKTFL (91 aa)) enclose the K-box domain.

Expressed in most plant tissues, roots, seedlings, leaves, stems, inflorescences, pollen, siliques and flowers.

Its subcellular location is the nucleus. In terms of biological role, probable transcription factor that prevents vernalization by short periods of cold. Acts as a floral repressor. This is Agamous-like MADS-box protein AGL31 (AGL31) from Arabidopsis thaliana (Mouse-ear cress).